We begin with the raw amino-acid sequence, 627 residues long: (-)-beta-pinene synthase 2, chloroplastic (627 aa).

The transit peptide at methionine 1–serine 51 directs the protein to the chloroplast. Mg(2+)-binding residues include aspartate 378, aspartate 382, and aspartate 530. The DDXXD motif motif lies at aspartate 378–aspartate 382.

The protein belongs to the terpene synthase family. Tpsd subfamily. Mg(2+) is required as a cofactor. The cofactor is Mn(2+).

The protein resides in the plastid. It is found in the chloroplast. It carries out the reaction (2E)-geranyl diphosphate = (1S,5S)-beta-pinene + diphosphate. The enzyme catalyses (2E)-geranyl diphosphate = (1S,5S)-alpha-pinene + diphosphate. It participates in terpene metabolism; oleoresin biosynthesis. The protein operates within secondary metabolite biosynthesis; terpenoid biosynthesis. Monoterpene synthase (TPS) involved in the biosynthesis of monoterpene natural products included in conifer oleoresin secretions and volatile emissions; these compounds contribute to biotic and abiotic stress defense against herbivores and pathogens. Catalyzes the conversion of (2E)-geranyl diphosphate (GPP) to (-)-beta-pinene and, to a lower extent, to (-)-alpha-pinene. The sequence is that of (-)-beta-pinene synthase 2, chloroplastic from Pinus banksiana (Jack pine).